Consider the following 307-residue polypeptide: G-protein coupled receptor 35 (307 aa).

The Extracellular portion of the chain corresponds to 1 to 18; it reads MNSTTCNSTLTWPASVNN. Residues N2 and N7 are each glycosylated (N-linked (GlcNAc...) asparagine). The helical transmembrane segment at 19–39 threads the bilayer; that stretch reads FFIIYSALLLVLGLLLNSVAL. The Cytoplasmic segment spans residues 40 to 53; the sequence is WVFCYRMHQWTETR. The helical transmembrane segment at 54–74 threads the bilayer; it reads IYMTNLAVADLCLLCSLPFVL. Topologically, residues 75 to 88 are extracellular; the sequence is YSLKYSSSDTPVCQ. A disulfide bond links C87 and C160. The chain crosses the membrane as a helical span at residues 89 to 110; the sequence is LSQGIYLANRYMSISLVTAIAV. Topologically, residues 111–129 are cytoplasmic; that stretch reads DRYVAVRHPLRARELRSPR. Residues 130 to 150 traverse the membrane as a helical segment; that stretch reads QAAAVCVALWVIVVTSLVVRW. The Extracellular portion of the chain corresponds to 151 to 176; that stretch reads RLGMQEGGFCFSSQTRRNFSTTAFSL. Residues 177-197 form a helical membrane-spanning segment; it reads LGFYLPLAIVVFCSLQVVTVL. The Cytoplasmic segment spans residues 198–217; sequence SRRPAADVGQAEATQKATHM. Residues 218–238 form a helical membrane-spanning segment; it reads VWANLAVFVICFLPLHVVLTV. At 239–257 the chain is on the extracellular side; sequence QVSLNLNTCAARDTFSRAL. The helical transmembrane segment at 258–278 threads the bilayer; that stretch reads SITGKLSDTNCCLDAICYYYM. The Cytoplasmic portion of the chain corresponds to 279 to 307; that stretch reads AREFQEASKPATSSNTPHKSQDSQILSLT. S286, S292, S298, and S301 each carry phosphoserine. The interval 288–307 is disordered; that stretch reads PATSSNTPHKSQDSQILSLT.

The protein belongs to the G-protein coupled receptor 1 family. Post-translationally, multiply phosphorylated in clusters of serines and threonines in the C-terminal tail. Phosphorylation of Ser-298 and Ser-301 is mediated by GRK5 and/or GRK6. As to expression, predominantly expressed in immune and gastrointestinal tissues. Strongly GPR35 expressed in colonic macrophages.

The protein localises to the cell membrane. Functionally, G-protein coupled receptor that binds to several ligands including the tryptophan metabolite kynurenic acid (KYNA), lysophosphatidic acid (LPA) or 5-hydroxyindoleacetic acid (5-HIAA) with high affinity, leading to rapid and transient activation of numerous intracellular signaling pathways. Plays a role in neutrophil recruitment to sites of inflammation and bacterial clearance through the major serotonin metabolite 5-HIAA that acts as a physiological ligand. Stimulates lipid metabolism, thermogenic, and anti-inflammatory gene expression in adipose tissue once activated by kynurenic acid. In macrophages, activation by lysophosphatidic acid promotes GPR35-induced signaling with a distinct transcriptional profile characterized by TNF production associated with ERK and NF-kappa-B activation. In turn, induces chemotaxis of macrophages. The protein is G-protein coupled receptor 35 (Gpr35) of Mus musculus (Mouse).